Here is a 314-residue protein sequence, read N- to C-terminus: 2,3-dihydroxyphenylpropionate/2,3-dihydroxicinnamic acid 1,2-dioxygenase (314 aa).

His-115 functions as the Proton donor in the catalytic mechanism. His-179 acts as the Proton acceptor in catalysis.

This sequence belongs to the LigB/MhpB extradiol dioxygenase family. Homotetramer. Fe(2+) serves as cofactor.

It catalyses the reaction 3-(2,3-dihydroxyphenyl)propanoate + O2 = (2Z,4E)-2-hydroxy-6-oxonona-2,4-dienedioate + H(+). It carries out the reaction (2E)-3-(2,3-dihydroxyphenyl)prop-2-enoate + O2 = (2Z,4E,7E)-2-hydroxy-6-oxonona-2,4,7-trienedioate + H(+). Its pathway is aromatic compound metabolism; 3-phenylpropanoate degradation. In terms of biological role, catalyzes the non-heme iron(II)-dependent oxidative cleavage of 2,3-dihydroxyphenylpropionic acid and 2,3-dihydroxicinnamic acid into 2-hydroxy-6-ketononadienedioate and 2-hydroxy-6-ketononatrienedioate, respectively. The sequence is that of 2,3-dihydroxyphenylpropionate/2,3-dihydroxicinnamic acid 1,2-dioxygenase from Escherichia coli O81 (strain ED1a).